A 245-amino-acid polypeptide reads, in one-letter code: 1-(5-phosphoribosyl)-5-[(5-phosphoribosylamino)methylideneamino] imidazole-4-carboxamide isomerase (245 aa).

D7 (proton acceptor) is an active-site residue. D129 acts as the Proton donor in catalysis.

This sequence belongs to the HisA/HisF family.

The protein localises to the cytoplasm. The catalysed reaction is 1-(5-phospho-beta-D-ribosyl)-5-[(5-phospho-beta-D-ribosylamino)methylideneamino]imidazole-4-carboxamide = 5-[(5-phospho-1-deoxy-D-ribulos-1-ylimino)methylamino]-1-(5-phospho-beta-D-ribosyl)imidazole-4-carboxamide. The protein operates within amino-acid biosynthesis; L-histidine biosynthesis; L-histidine from 5-phospho-alpha-D-ribose 1-diphosphate: step 4/9. The polypeptide is 1-(5-phosphoribosyl)-5-[(5-phosphoribosylamino)methylideneamino] imidazole-4-carboxamide isomerase (Salmonella dublin (strain CT_02021853)).